The sequence spans 462 residues: General transcription factor IIH subunit 4 (462 aa).

This sequence belongs to the TFB2 family. In terms of assembly, component of the 7-subunit TFIIH core complex composed of XPB/ERCC3, XPD/ERCC2, GTF2H1, GTF2H2, GTF2H3, GTF2H4 and GTF2H5, which is active in NER. The core complex associates with the 3-subunit CDK-activating kinase (CAK) module composed of CCNH/cyclin H, CDK7 and MNAT1 to form the 10-subunit holoenzyme (holo-TFIIH) active in transcription. Part of TBP-based Pol II pre-initiation complex (PIC), in which Pol II core assembles with general transcription factors and other specific initiation factors including GTF2E1, GTF2E2, GTF2F1, GTF2F2, TCEA1, ERCC2, ERCC3, GTF2H2, GTF2H3, GTF2H4, GTF2H5, GTF2A1, GTF2A2, GTF2B and TBP; this large multi-subunit PIC complex mediates DNA unwinding and targets Pol II core to the transcription start site where the first phosphodiester bond forms.

The protein resides in the nucleus. Functionally, component of the general transcription and DNA repair factor IIH (TFIIH) core complex, which is involved in general and transcription-coupled nucleotide excision repair (NER) of damaged DNA and, when complexed to CAK, in RNA transcription by RNA polymerase II. In NER, TFIIH acts by opening DNA around the lesion to allow the excision of the damaged oligonucleotide and its replacement by a new DNA fragment. In transcription, TFIIH has an essential role in transcription initiation. When the pre-initiation complex (PIC) has been established, TFIIH is required for promoter opening and promoter escape. Phosphorylation of the C-terminal tail (CTD) of the largest subunit of RNA polymerase II by the kinase module CAK controls the initiation of transcription. In terms of biological role, stimulates the ATPase activity of TFIIH subunit XPB/ERCC3. The sequence is that of General transcription factor IIH subunit 4 (GTF2H4) from Homo sapiens (Human).